Reading from the N-terminus, the 227-residue chain is Probable methylthioribulose-1-phosphate dehydratase (227 aa).

Cys87 contributes to the substrate binding site. Zn(2+) contacts are provided by His105 and His107. The Proton donor/acceptor role is filled by Glu129. Residue His185 participates in Zn(2+) binding.

The protein belongs to the aldolase class II family. MtnB subfamily. It depends on Zn(2+) as a cofactor.

The protein resides in the cytoplasm. It carries out the reaction 5-(methylsulfanyl)-D-ribulose 1-phosphate = 5-methylsulfanyl-2,3-dioxopentyl phosphate + H2O. The protein operates within amino-acid biosynthesis; L-methionine biosynthesis via salvage pathway; L-methionine from S-methyl-5-thio-alpha-D-ribose 1-phosphate: step 2/6. In terms of biological role, catalyzes the dehydration of methylthioribulose-1-phosphate (MTRu-1-P) into 2,3-diketo-5-methylthiopentyl-1-phosphate (DK-MTP-1-P). The protein is Probable methylthioribulose-1-phosphate dehydratase of Drosophila ananassae (Fruit fly).